We begin with the raw amino-acid sequence, 144 residues long: MCGCRASVPSTKHYSVNPAPTTRSPPAAAGMPKRIPIAKQLASIKALEKGSDLEKAFATAALVYNNSADPEGKLSKAETKSLLQTQFSRFIQGQENKPKYQEMISALDEEPEKKIDFEDFMISLVSLALLSDLLQEIKNVKSTK.

Residues 1 to 31 are disordered; the sequence is MCGCRASVPSTKHYSVNPAPTTRSPPAAAGM. Residues 18-29 are compositionally biased toward low complexity; sequence PAPTTRSPPAAA.

It belongs to the S-100 family.

The protein resides in the cell projection. Its subcellular location is the cilium. In terms of biological role, may be a component of the linker structure that bridges the ciliary membrane and peripheral singlet microtubules. The protein is Sentan of Gallus gallus (Chicken).